Consider the following 166-residue polypeptide: Regulatory protein RecX (166 aa).

It belongs to the RecX family.

It is found in the cytoplasm. In terms of biological role, modulates RecA activity. The polypeptide is Regulatory protein RecX (Shigella dysenteriae serotype 1 (strain Sd197)).